Reading from the N-terminus, the 447-residue chain is Adenylosuccinate synthetase (447 aa).

Residues 35-41 (GDEGKGK) and 63-65 (GHT) contribute to the GTP site. Asp36 serves as the catalytic Proton acceptor. Residues Asp36 and Gly63 each contribute to the Mg(2+) site. IMP contacts are provided by residues 36–39 (DEGK), 61–64 (NAGH), Thr153, Arg167, Asn245, Thr260, and Arg324. His64 functions as the Proton donor in the catalytic mechanism. 320-326 (VTTKRKR) contributes to the substrate binding site. GTP is bound by residues Arg326, 352–354 (KLD), and 435–437 (GVG).

It belongs to the adenylosuccinate synthetase family. In terms of assembly, homodimer. Mg(2+) serves as cofactor.

Its subcellular location is the cytoplasm. The enzyme catalyses IMP + L-aspartate + GTP = N(6)-(1,2-dicarboxyethyl)-AMP + GDP + phosphate + 2 H(+). It functions in the pathway purine metabolism; AMP biosynthesis via de novo pathway; AMP from IMP: step 1/2. In terms of biological role, plays an important role in the de novo pathway and in the salvage pathway of purine nucleotide biosynthesis. Catalyzes the first committed step in the biosynthesis of AMP from IMP. The chain is Adenylosuccinate synthetase from Drosophila erecta (Fruit fly).